The following is a 62-amino-acid chain: Fungus-induced protein 1 (62 aa).

The signal sequence occupies residues 1–22 (MSQNLFQILLIFAILAALQVQG).

This chain is Fungus-induced protein 1, found in Caenorhabditis briggsae.